The primary structure comprises 187 residues: Cytochrome c oxidase assembly protein CtaG (187 aa).

Residues 1 to 9 are Cytoplasmic-facing; sequence MSKKSNKNL. Residues 10-30 traverse the membrane as a helical; Signal-anchor for type II membrane protein segment; that stretch reads AFSLLGLIISMVLLSFASVPI. Residues 31 to 187 are Periplasmic-facing; the sequence is YNLFCKVTGY…IASLRGNTKY (157 aa).

The protein belongs to the COX11/CtaG family.

The protein localises to the cell inner membrane. In terms of biological role, exerts its effect at some terminal stage of cytochrome c oxidase synthesis, probably by being involved in the insertion of the copper B into subunit I. This is Cytochrome c oxidase assembly protein CtaG from Rickettsia felis (strain ATCC VR-1525 / URRWXCal2) (Rickettsia azadi).